Reading from the N-terminus, the 107-residue chain is Death-associated protein-like 1 (107 aa).

A disordered region spans residues 1 to 26; that stretch reads MANEVQVQLSPLKGGHPPAVKAGGKR.

Detected in the corneal epithelium, and only in trace amounts in the liver, bladder, brain, heart, and stomach.

In terms of biological role, may play a role in the early stages of epithelial differentiation or in apoptosis. This is Death-associated protein-like 1 (DAPL1) from Bos taurus (Bovine).